We begin with the raw amino-acid sequence, 134 residues long: Small ribosomal subunit protein uS11 (134 aa).

Residues 1–21 (MPPKSRQGAGRKVRRKEKKNV) are disordered. Residues 9–21 (AGRKVRRKEKKNV) show a composition bias toward basic residues.

It belongs to the universal ribosomal protein uS11 family. In terms of assembly, part of the 30S ribosomal subunit. Interacts with proteins S7 and S18. Binds to IF-3.

Its function is as follows. Located on the platform of the 30S subunit, it bridges several disparate RNA helices of the 16S rRNA. Forms part of the Shine-Dalgarno cleft in the 70S ribosome. This chain is Small ribosomal subunit protein uS11, found in Thermobifida fusca (strain YX).